The primary structure comprises 331 residues: 2-isopropylmalate synthase (331 aa).

The Pyruvate carboxyltransferase domain occupies 1-80 (RDEVVRGRDV…YTRINTREIY (80 aa)). Mn(2+) contacts are provided by His15, His17, and Asn51. The regulatory domain stretch occupies residues 205–331 (QLEHVQFFSG…PSIEEVHRGV (127 aa)).

The protein belongs to the alpha-IPM synthase/homocitrate synthase family. LeuA type 1 subfamily. Homotetramer. Mn(2+) serves as cofactor.

The protein resides in the cytoplasm. It catalyses the reaction 3-methyl-2-oxobutanoate + acetyl-CoA + H2O = (2S)-2-isopropylmalate + CoA + H(+). The protein operates within amino-acid biosynthesis; L-leucine biosynthesis; L-leucine from 3-methyl-2-oxobutanoate: step 1/4. Functionally, catalyzes the condensation of the acetyl group of acetyl-CoA with 3-methyl-2-oxobutanoate (2-oxoisovalerate) to form 3-carboxy-3-hydroxy-4-methylpentanoate (2-isopropylmalate). This is 2-isopropylmalate synthase from Thermus thermophilus.